The primary structure comprises 465 residues: MAP kinase-interacting serine/threonine-protein kinase 1 (465 aa).

The span at 1-11 (MVSSQKLEKPI) shows a compositional bias: basic and acidic residues. The interval 1-40 (MVSSQKLEKPIEMGSSEPLPIADGDRRRKKKRRGRATDSL) is disordered. At S39 the chain carries Phosphoserine. In terms of domain architecture, Protein kinase spans 49-374 (KLTSELLGEG…AAQVLQHPWV (326 aa)). Residues 55–63 (LGEGAYAKV) and K78 contribute to the ATP site. Polar residues predominate over residues 185 to 203 (APTSLGSSDPPTSASQVAG). Positions 185 to 204 (APTSLGSSDPPTSASQVAGT) are disordered. The active-site Proton acceptor is the D211. Phosphoserine occurs at positions 221 and 226. Phosphothreonine occurs at positions 250, 255, and 385. Residues 446–465 (RRRALAQAGRGEDRSPPTAL) are disordered. The span at 455 to 465 (RGEDRSPPTAL) shows a compositional bias: basic and acidic residues. S460 is subject to Phosphoserine.

The protein belongs to the protein kinase superfamily. CAMK Ser/Thr protein kinase family. As to quaternary structure, interacts with the C-terminal regions of EIF4G1 and EIF4G2. Also binds to dephosphorylated ERK1 and ERK2, and to the p38 kinases. The cofactor is Mg(2+). Dual phosphorylation of Thr-250 and Thr-255 activates the kinase. Phosphorylation of Thr-385 activates the kinase. MAPK3/ERK1 is one of the kinases which activate MKNK1/MNK1. Phosphorylation by PAK2 leads to a reduced phosphorylation of EIF4G1. Ubiquitous.

It is found in the cytoplasm. It localises to the nucleus. It catalyses the reaction L-seryl-[protein] + ATP = O-phospho-L-seryl-[protein] + ADP + H(+). The catalysed reaction is L-threonyl-[protein] + ATP = O-phospho-L-threonyl-[protein] + ADP + H(+). Its activity is regulated as follows. Phosphorylated and activated by the p38 kinases and kinases in the Erk pathway. In terms of biological role, may play a role in the response to environmental stress and cytokines. Appears to regulate translation by phosphorylating EIF4E, thus increasing the affinity of this protein for the 7-methylguanosine-containing mRNA cap. This chain is MAP kinase-interacting serine/threonine-protein kinase 1 (MKNK1), found in Homo sapiens (Human).